The sequence spans 530 residues: G2/mitotic-specific cyclin-B (530 aa).

A disordered region spans residues 76 to 152; sequence ARVDSHWKKQ…EPTLKREDSN (77 aa). The segment covering 121–144 has biased composition (low complexity); the sequence is PTKTTVEPTKVTVKSSSSENVNEP. Ser-137 is subject to Phosphoserine.

Belongs to the cyclin family. Cyclin AB subfamily. Interacts with the protein kinase Cdk1 to form a serine/threonine kinase holoenzyme complex also known as maturation promoting factor (MPF). The cyclin subunit imparts substrate specificity to the complex.

Its function is as follows. Essential for the control of the cell cycle at the G2/M (mitosis) transition. The polypeptide is G2/mitotic-specific cyclin-B (CycB) (Drosophila melanogaster (Fruit fly)).